The chain runs to 403 residues: Argininosuccinate synthase (403 aa).

Residues 12–20 and alanine 39 contribute to the ATP site; that span reads AYSGGLDTS. Tyrosine 91 and serine 96 together coordinate L-citrulline. Glycine 121 provides a ligand contact to ATP. The L-aspartate site is built by threonine 123, asparagine 127, and aspartate 128. Asparagine 127 contacts L-citrulline. L-citrulline-binding residues include arginine 131, serine 180, serine 189, glutamate 265, and tyrosine 277.

The protein belongs to the argininosuccinate synthase family. Type 1 subfamily. In terms of assembly, homotetramer.

The protein resides in the cytoplasm. It catalyses the reaction L-citrulline + L-aspartate + ATP = 2-(N(omega)-L-arginino)succinate + AMP + diphosphate + H(+). Its pathway is amino-acid biosynthesis; L-arginine biosynthesis; L-arginine from L-ornithine and carbamoyl phosphate: step 2/3. This chain is Argininosuccinate synthase, found in Vibrio vulnificus (strain CMCP6).